A 501-amino-acid polypeptide reads, in one-letter code: DEAD-box ATP-dependent RNA helicase 20 (501 aa).

2 stretches are compositionally biased toward basic and acidic residues: residues Met-1–Asp-20 and Ser-38–Leu-53. A disordered region spans residues Met-1–Leu-53. The Q motif signature appears at Lys-99 to Ser-127. Positions Trp-130 to Val-305 constitute a Helicase ATP-binding domain. Ala-143–Thr-150 contacts ATP. The DEAD box signature appears at Asp-253–Asp-256. Residues Lys-333–Gly-478 enclose the Helicase C-terminal domain. The disordered stretch occupies residues Glu-473–Ser-501. Residues Phe-491–Ser-501 show a composition bias toward basic and acidic residues.

Belongs to the DEAD box helicase family. DDX5/DBP2 subfamily.

The protein resides in the nucleus. The catalysed reaction is ATP + H2O = ADP + phosphate + H(+). Its function is as follows. ATP-dependent RNA helicase involved nonsense-mediated mRNA decay and ribosome biogenesis through rRNA processing. This Arabidopsis thaliana (Mouse-ear cress) protein is DEAD-box ATP-dependent RNA helicase 20 (RH20).